Reading from the N-terminus, the 345-residue chain is Fructose-1,6-bisphosphatase class 1 (345 aa).

Glu90, Asp109, Leu111, and Asp112 together coordinate Mg(2+). Substrate is bound by residues 112 to 115 and Asn199; that span reads DGSS. Glu271 contributes to the Mg(2+) binding site.

This sequence belongs to the FBPase class 1 family. In terms of assembly, homotetramer. Requires Mg(2+) as cofactor.

It localises to the cytoplasm. The enzyme catalyses beta-D-fructose 1,6-bisphosphate + H2O = beta-D-fructose 6-phosphate + phosphate. Its pathway is carbohydrate biosynthesis; Calvin cycle. In Rhodopseudomonas palustris (strain BisB5), this protein is Fructose-1,6-bisphosphatase class 1.